The primary structure comprises 24 residues: Hyaluronidase (24 aa).

In terms of tissue distribution, expressed by the venom gland.

It is found in the secreted. The catalysed reaction is Random hydrolysis of (1-&gt;4)-linkages between N-acetyl-beta-D-glucosamine and D-glucuronate residues in hyaluronate.. Its function is as follows. Possesses high activity against hyaluronan in vitro. The sequence is that of Hyaluronidase from Tityus stigmurus (Brazilian scorpion).